A 99-amino-acid chain; its full sequence is Meromycolate extension acyl carrier protein (99 aa).

The 79-residue stretch at 3-81 folds into the Carrier domain; that stretch reads ATQEEIIAGL…DVVAYIQKLE (79 aa). Ser-41 is subject to O-(pantetheine 4'-phosphoryl)serine. Lys-79 participates in a covalent cross-link: Isoglutamyl lysine isopeptide (Lys-Gln) (interchain with Q-Cter in protein Pup).

It belongs to the acyl carrier protein (ACP) family. 4'-phosphopantetheine is transferred from CoA to a specific serine of apo-AcpM.

The protein resides in the cytoplasm. Acyl carrier protein involved in meromycolate extension. In Mycolicibacterium smegmatis (strain ATCC 700084 / mc(2)155) (Mycobacterium smegmatis), this protein is Meromycolate extension acyl carrier protein (acpM).